Consider the following 97-residue polypeptide: Co-chaperonin GroES (97 aa).

It belongs to the GroES chaperonin family. As to quaternary structure, heptamer of 7 subunits arranged in a ring. Interacts with the chaperonin GroEL.

The protein localises to the cytoplasm. In terms of biological role, together with the chaperonin GroEL, plays an essential role in assisting protein folding. The GroEL-GroES system forms a nano-cage that allows encapsulation of the non-native substrate proteins and provides a physical environment optimized to promote and accelerate protein folding. GroES binds to the apical surface of the GroEL ring, thereby capping the opening of the GroEL channel. The polypeptide is Co-chaperonin GroES (Photorhabdus laumondii subsp. laumondii (strain DSM 15139 / CIP 105565 / TT01) (Photorhabdus luminescens subsp. laumondii)).